The following is a 366-amino-acid chain: tRNA 2-selenouridine synthase (366 aa).

The 124-residue stretch at 12 to 135 (FLNDVPMMDA…MRTFLLDTLH (124 aa)) folds into the Rhodanese domain. Cysteine 95 (S-selanylcysteine intermediate) is an active-site residue.

The protein belongs to the SelU family. In terms of assembly, monomer.

It catalyses the reaction 5-methylaminomethyl-2-thiouridine(34) in tRNA + selenophosphate + (2E)-geranyl diphosphate + H2O + H(+) = 5-methylaminomethyl-2-selenouridine(34) in tRNA + (2E)-thiogeraniol + phosphate + diphosphate. The enzyme catalyses 5-methylaminomethyl-2-thiouridine(34) in tRNA + (2E)-geranyl diphosphate = 5-methylaminomethyl-S-(2E)-geranyl-thiouridine(34) in tRNA + diphosphate. The catalysed reaction is 5-methylaminomethyl-S-(2E)-geranyl-thiouridine(34) in tRNA + selenophosphate + H(+) = 5-methylaminomethyl-2-(Se-phospho)selenouridine(34) in tRNA + (2E)-thiogeraniol. It carries out the reaction 5-methylaminomethyl-2-(Se-phospho)selenouridine(34) in tRNA + H2O = 5-methylaminomethyl-2-selenouridine(34) in tRNA + phosphate. Its function is as follows. Involved in the post-transcriptional modification of the uridine at the wobble position (U34) of tRNA(Lys), tRNA(Glu) and tRNA(Gln). Catalyzes the conversion of 2-thiouridine (S2U-RNA) to 2-selenouridine (Se2U-RNA). Acts in a two-step process involving geranylation of 2-thiouridine (S2U) to S-geranyl-2-thiouridine (geS2U) and subsequent selenation of the latter derivative to 2-selenouridine (Se2U) in the tRNA chain. The protein is tRNA 2-selenouridine synthase of Pseudomonas savastanoi pv. phaseolicola (strain 1448A / Race 6) (Pseudomonas syringae pv. phaseolicola (strain 1448A / Race 6)).